Consider the following 60-residue polypeptide: Large ribosomal subunit protein uL30 (60 aa).

It belongs to the universal ribosomal protein uL30 family. As to quaternary structure, part of the 50S ribosomal subunit.

This is Large ribosomal subunit protein uL30 from Burkholderia mallei (strain NCTC 10247).